We begin with the raw amino-acid sequence, 200 residues long: 2,3-bisphosphoglycerate-dependent phosphoglycerate mutase (200 aa).

Residue His9 is the Tele-phosphohistidine intermediate of the active site. The active site involves His142.

This sequence belongs to the phosphoglycerate mutase family. In terms of assembly, homodimer.

The catalysed reaction is (2R)-2-phosphoglycerate = (2R)-3-phosphoglycerate. The protein operates within carbohydrate degradation; glycolysis; pyruvate from D-glyceraldehyde 3-phosphate: step 3/5. Functionally, catalyzes the interconversion of 2-phosphoglycerate and 3-phosphoglycerate. This is 2,3-bisphosphoglycerate-dependent phosphoglycerate mutase from Thermoplasma acidophilum (strain ATCC 25905 / DSM 1728 / JCM 9062 / NBRC 15155 / AMRC-C165).